Here is an 84-residue protein sequence, read N- to C-terminus: Small ribosomal subunit protein uS17 (84 aa).

The protein belongs to the universal ribosomal protein uS17 family. In terms of assembly, part of the 30S ribosomal subunit.

Its function is as follows. One of the primary rRNA binding proteins, it binds specifically to the 5'-end of 16S ribosomal RNA. In Nitrosomonas europaea (strain ATCC 19718 / CIP 103999 / KCTC 2705 / NBRC 14298), this protein is Small ribosomal subunit protein uS17.